We begin with the raw amino-acid sequence, 156 residues long: Small ribosomal subunit protein uS7 (156 aa).

This sequence belongs to the universal ribosomal protein uS7 family. As to quaternary structure, part of the 30S ribosomal subunit. Contacts proteins S9 and S11.

One of the primary rRNA binding proteins, it binds directly to 16S rRNA where it nucleates assembly of the head domain of the 30S subunit. Is located at the subunit interface close to the decoding center, probably blocks exit of the E-site tRNA. The protein is Small ribosomal subunit protein uS7 of Sodalis glossinidius (strain morsitans).